The primary structure comprises 333 residues: Adenosine deaminase (333 aa).

The Zn(2+) site is built by His-12 and His-14. 3 residues coordinate substrate: His-14, Asp-16, and Gly-170. His-197 provides a ligand contact to Zn(2+). Catalysis depends on Glu-200, which acts as the Proton donor. Asp-278 serves as a coordination point for Zn(2+). Asp-279 contributes to the substrate binding site.

Belongs to the metallo-dependent hydrolases superfamily. Adenosine and AMP deaminases family. Adenosine deaminase subfamily. Zn(2+) is required as a cofactor.

It catalyses the reaction adenosine + H2O + H(+) = inosine + NH4(+). It carries out the reaction 2'-deoxyadenosine + H2O + H(+) = 2'-deoxyinosine + NH4(+). Functionally, catalyzes the hydrolytic deamination of adenosine and 2-deoxyadenosine. The polypeptide is Adenosine deaminase (Shigella dysenteriae serotype 1 (strain Sd197)).